A 554-amino-acid chain; its full sequence is Oxygen-dependent choline dehydrogenase (554 aa).

FAD is bound at residue 4-33 (DYIIIGAGSAGNVLATRLTEDPNTTVLLLE). The Proton acceptor role is filled by His473.

It belongs to the GMC oxidoreductase family. It depends on FAD as a cofactor.

It carries out the reaction choline + A = betaine aldehyde + AH2. The catalysed reaction is betaine aldehyde + NAD(+) + H2O = glycine betaine + NADH + 2 H(+). It participates in amine and polyamine biosynthesis; betaine biosynthesis via choline pathway; betaine aldehyde from choline (cytochrome c reductase route): step 1/1. Functionally, involved in the biosynthesis of the osmoprotectant glycine betaine. Catalyzes the oxidation of choline to betaine aldehyde and betaine aldehyde to glycine betaine at the same rate. This Klebsiella pneumoniae (strain 342) protein is Oxygen-dependent choline dehydrogenase.